The primary structure comprises 175 residues: ATP-dependent protease subunit HslV (175 aa).

The active site involves threonine 2. Positions 157, 160, and 163 each coordinate Na(+).

The protein belongs to the peptidase T1B family. HslV subfamily. In terms of assembly, a double ring-shaped homohexamer of HslV is capped on each side by a ring-shaped HslU homohexamer. The assembly of the HslU/HslV complex is dependent on binding of ATP.

It is found in the cytoplasm. The enzyme catalyses ATP-dependent cleavage of peptide bonds with broad specificity.. Allosterically activated by HslU binding. Its function is as follows. Protease subunit of a proteasome-like degradation complex believed to be a general protein degrading machinery. The chain is ATP-dependent protease subunit HslV from Photobacterium profundum (strain SS9).